Reading from the N-terminus, the 277-residue chain is Probable endonuclease 4 (277 aa).

Zn(2+) is bound by residues H70, H108, E143, D176, H179, H210, D223, H225, and E255.

It belongs to the AP endonuclease 2 family. Zn(2+) serves as cofactor.

It catalyses the reaction Endonucleolytic cleavage to 5'-phosphooligonucleotide end-products.. In terms of biological role, endonuclease IV plays a role in DNA repair. It cleaves phosphodiester bonds at apurinic or apyrimidinic (AP) sites, generating a 3'-hydroxyl group and a 5'-terminal sugar phosphate. In Mycoplasmopsis synoviae (strain 53) (Mycoplasma synoviae), this protein is Probable endonuclease 4.